Consider the following 1504-residue polypeptide: DNA polymerase zeta catalytic subunit (1504 aa).

Positions 1398, 1401, 1414, and 1417 each coordinate Zn(2+). Residues 1398-1417 (CCNCGEELTKICSLQLCDDC) form a CysA-type zinc finger. Residues C1446, C1449, C1468, and C1473 each coordinate [4Fe-4S] cluster. The short motif at 1446-1473 (CRTCSYRYTSDAGIENDHIASKCNSYDC) is the CysB motif element.

This sequence belongs to the DNA polymerase type-B family. Forms DNA polymerase zeta with REV7. The cofactor is [4Fe-4S] cluster.

Its subcellular location is the mitochondrion. It localises to the nucleus. The catalysed reaction is DNA(n) + a 2'-deoxyribonucleoside 5'-triphosphate = DNA(n+1) + diphosphate. In terms of biological role, nonessential DNA polymerase. Required for DNA damage induced mutagenesis. Involved in DNA repair, mitochondrial DNA repair and translesion synthesis. Translesion synthesis in S.cerevisiae may use a specialized DNA polymerase that is not required for other DNA replicative processes. Has a role in the bypass of abasic (AP) sites. Highly inefficient in incorporating nucleotides opposite the AP site, but efficiently extends from nucleotides, particularly an A, inserted opposite the lesion. The protein is DNA polymerase zeta catalytic subunit (REV3) of Saccharomyces cerevisiae (strain ATCC 204508 / S288c) (Baker's yeast).